The sequence spans 414 residues: Enolase (414 aa).

Glutamine 162 contacts (2R)-2-phosphoglycerate. The Proton donor role is filled by glutamate 204. Positions 239, 280, and 307 each coordinate Mg(2+). (2R)-2-phosphoglycerate-binding residues include lysine 332, arginine 361, serine 362, and lysine 383. The active-site Proton acceptor is the lysine 332.

It belongs to the enolase family. The cofactor is Mg(2+).

Its subcellular location is the cytoplasm. It is found in the secreted. It localises to the cell surface. The enzyme catalyses (2R)-2-phosphoglycerate = phosphoenolpyruvate + H2O. Its pathway is carbohydrate degradation; glycolysis; pyruvate from D-glyceraldehyde 3-phosphate: step 4/5. In terms of biological role, catalyzes the reversible conversion of 2-phosphoglycerate (2-PG) into phosphoenolpyruvate (PEP). It is essential for the degradation of carbohydrates via glycolysis. The sequence is that of Enolase from Campylobacter jejuni subsp. doylei (strain ATCC BAA-1458 / RM4099 / 269.97).